The following is a 392-amino-acid chain: MSHDPQPLGGKIISKPVMIFGPLIVICMLLIVKRLVFGLGSVSDLNGGFPWGVWIAFDLLIGTGFACGGWALAWAVYVFNRGQYHPLVRPALLASLFGYSLGGLSITIDVGRYWNLPYFYIPGHFNVNSVLFETAVCMTIYIGVMALEFAPALFERLGWKVSLQRLNKVMFFIIALGALLPTMHQSSMGSLMISAGYKVHPLWQSYEMLPLFSLLTAFIMGFSIVIFEGSLVQAGLRGNGPDEKSLFVKLTNTISVLLAIFIVLRFGELIYRDKLSLAFAGDFYSVMFWIEVLLMLFPLVVLRVAKLRNDSRMLFLSALSALLGCATWRLTYSLVAFNPGGGYAYFPTWEELLISIGFVAIEICAYIVLIRLLPILPPLKQNDHNRHEASKA.

At 1 to 11 (MSHDPQPLGGK) the chain is on the periplasmic side. The helical transmembrane segment at 12-32 (IISKPVMIFGPLIVICMLLIV) threads the bilayer. Topologically, residues 33–34 (KR) are cytoplasmic. A helical transmembrane segment spans residues 35 to 55 (LVFGLGSVSDLNGGFPWGVWI). Over 56-58 (AFD) the chain is Periplasmic. Residues 59–79 (LLIGTGFACGGWALAWAVYVF) traverse the membrane as a helical segment. Topologically, residues 80-90 (NRGQYHPLVRP) are cytoplasmic. A helical membrane pass occupies residues 91-111 (ALLASLFGYSLGGLSITIDVG). The Periplasmic portion of the chain corresponds to 112–133 (RYWNLPYFYIPGHFNVNSVLFE). A helical membrane pass occupies residues 134–154 (TAVCMTIYIGVMALEFAPALF). At 155 to 168 (ERLGWKVSLQRLNK) the chain is on the cytoplasmic side. A helical membrane pass occupies residues 169–189 (VMFFIIALGALLPTMHQSSMG). Residues 190-207 (SLMISAGYKVHPLWQSYE) lie on the Periplasmic side of the membrane. A helical transmembrane segment spans residues 208–228 (MLPLFSLLTAFIMGFSIVIFE). Residues 229 to 249 (GSLVQAGLRGNGPDEKSLFVK) are Cytoplasmic-facing. The helical transmembrane segment at 250–270 (LTNTISVLLAIFIVLRFGELI) threads the bilayer. At 271–281 (YRDKLSLAFAG) the chain is on the periplasmic side. The helical transmembrane segment at 282 to 302 (DFYSVMFWIEVLLMLFPLVVL) threads the bilayer. At 303 to 333 (RVAKLRNDSRMLFLSALSALLGCATWRLTYS) the chain is on the cytoplasmic side. A helical transmembrane segment spans residues 334–354 (LVAFNPGGGYAYFPTWEELLI). Residue serine 355 is a topological domain, periplasmic. Residues 356–376 (IGFVAIEICAYIVLIRLLPIL) form a helical membrane-spanning segment. Residues 377 to 392 (PPLKQNDHNRHEASKA) are Cytoplasmic-facing.

This sequence belongs to the NrfD family.

The protein resides in the cell inner membrane. Functionally, probable b-type cytochrome. The polypeptide is Probable Ni/Fe-hydrogenase 2 b-type cytochrome subunit (hybB) (Escherichia coli (strain K12)).